Consider the following 175-residue polypeptide: dATP triphosphohydrolase (175 aa).

Arg19 contacts dATP. Co(2+) contacts are provided by His34, His66, Asp67, Glu70, Asp75, and Asp119.

The protein belongs to the Caudovirales dATP triphosphohydrolase family. Homohexamer. Requires Co(2+) as cofactor. Zn(2+) is required as a cofactor.

The enzyme catalyses dATP + H2O = 2'-deoxyadenosine + triphosphate + H(+). It carries out the reaction dADP + H2O = 2'-deoxyadenosine + diphosphate. The catalysed reaction is dAMP + H2O = 2'-deoxyadenosine + phosphate. Its function is as follows. Catalyzes the hydrolysis of dATP, dADP and dAMP into dA. This step is essential for Z-genome synthesis (containing aminoadenine instead of adenine). Specifically removes dATP and its precursor dADP from the nucleotide pool of the host, preventing the incorporation of A into the phage genome and favoring the integration of the Z-base into the viral genome. This is dATP triphosphohydrolase (datZ) from Cyanophage S-2L (Cyanobacteria phage S-2L).